A 395-amino-acid chain; its full sequence is ATP phosphoribosyltransferase regulatory subunit (395 aa).

The protein belongs to the class-II aminoacyl-tRNA synthetase family. HisZ subfamily. As to quaternary structure, heteromultimer composed of HisG and HisZ subunits.

Its subcellular location is the cytoplasm. It functions in the pathway amino-acid biosynthesis; L-histidine biosynthesis; L-histidine from 5-phospho-alpha-D-ribose 1-diphosphate: step 1/9. Required for the first step of histidine biosynthesis. May allow the feedback regulation of ATP phosphoribosyltransferase activity by histidine. This is ATP phosphoribosyltransferase regulatory subunit from Pseudomonas fluorescens (strain Pf0-1).